A 329-amino-acid chain; its full sequence is 4-hydroxythreonine-4-phosphate dehydrogenase (329 aa).

His-136 and Thr-137 together coordinate substrate. A divalent metal cation is bound by residues His-166, His-211, and His-266. Substrate is bound by residues Lys-274, Asn-283, and Arg-292.

This sequence belongs to the PdxA family. Homodimer. The cofactor is Zn(2+). Requires Mg(2+) as cofactor. Co(2+) is required as a cofactor.

It is found in the cytoplasm. It carries out the reaction 4-(phosphooxy)-L-threonine + NAD(+) = 3-amino-2-oxopropyl phosphate + CO2 + NADH. Its pathway is cofactor biosynthesis; pyridoxine 5'-phosphate biosynthesis; pyridoxine 5'-phosphate from D-erythrose 4-phosphate: step 4/5. Catalyzes the NAD(P)-dependent oxidation of 4-(phosphooxy)-L-threonine (HTP) into 2-amino-3-oxo-4-(phosphooxy)butyric acid which spontaneously decarboxylates to form 3-amino-2-oxopropyl phosphate (AHAP). In Shigella boydii serotype 4 (strain Sb227), this protein is 4-hydroxythreonine-4-phosphate dehydrogenase.